The sequence spans 242 residues: Probable L-ribulose-5-phosphate 4-epimerase UlaF (242 aa).

Residues 31-32 (GN), 48-49 (SG), and 78-79 (SS) each bind substrate. Zn(2+)-binding residues include Asp80, His99, and His101. Residue Asp124 is the Proton donor/acceptor of the active site. Zn(2+) is bound at residue His175. The Proton donor/acceptor role is filled by Tyr234.

It belongs to the aldolase class II family. AraD/FucA subfamily. Requires Zn(2+) as cofactor.

It carries out the reaction L-ribulose 5-phosphate = D-xylulose 5-phosphate. The protein operates within cofactor degradation; L-ascorbate degradation; D-xylulose 5-phosphate from L-ascorbate: step 4/4. In terms of biological role, catalyzes the isomerization of L-ribulose 5-phosphate to D-xylulose 5-phosphate. Is involved in the anaerobic L-ascorbate utilization. The sequence is that of Probable L-ribulose-5-phosphate 4-epimerase UlaF from Mycoplasma pneumoniae (strain ATCC 29342 / M129 / Subtype 1) (Mycoplasmoides pneumoniae).